A 178-amino-acid chain; its full sequence is Large ribosomal subunit protein uL6 (178 aa).

Belongs to the universal ribosomal protein uL6 family. Part of the 50S ribosomal subunit.

Functionally, this protein binds to the 23S rRNA, and is important in its secondary structure. It is located near the subunit interface in the base of the L7/L12 stalk, and near the tRNA binding site of the peptidyltransferase center. The protein is Large ribosomal subunit protein uL6 of Francisella tularensis subsp. novicida (strain U112).